A 451-amino-acid chain; its full sequence is Medium-chain fatty acid ethyl ester synthase/esterase 2 (451 aa).

A Glycyl lysine isopeptide (Lys-Gly) (interchain with G-Cter in ubiquitin) cross-link involves residue Lys-114. One can recognise an AB hydrolase-1 domain in the interval 166–430 (PLVVILHGLA…GGHLAYLDKD (265 aa)). Active-site charge relay system residues include Ser-247, Asp-395, and His-423.

Belongs to the AB hydrolase superfamily. AB hydrolase 4 family.

It carries out the reaction an aliphatic alcohol + acetyl-CoA = an acetyl ester + CoA. Displays enzymatic activity both for medium-chain fatty acid (MCFA) ethyl ester synthesis and hydrolysis (esterase activity). MCFA are toxic for yeast and this enzyme could thus be involved in their detoxification by esterification. This Saccharomyces cerevisiae (strain ATCC 204508 / S288c) (Baker's yeast) protein is Medium-chain fatty acid ethyl ester synthase/esterase 2 (EHT1).